Consider the following 290-residue polypeptide: Glucuronoxylan 4-O-methyltransferase 2 (290 aa).

A helical transmembrane segment spans residues 8-28; the sequence is FISSKLIFICCSILVLFILFL.

It belongs to the methyltransferase superfamily. In terms of tissue distribution, expressed in roots, rosette leaves and stems.

It is found in the golgi apparatus membrane. It carries out the reaction glucuronoxylan D-glucuronate + n S-adenosyl-L-methionine = glucuronoxylan 4-O-methyl-D-glucuronate + n S-adenosyl-L-homocysteine + n H(+). Methyltransferase catalyzing 4-O-methylation of glucuronic acid side chains on xylan. The chain is Glucuronoxylan 4-O-methyltransferase 2 (GXM2) from Arabidopsis thaliana (Mouse-ear cress).